Here is a 436-residue protein sequence, read N- to C-terminus: Trigger factor (436 aa).

Positions 161 to 246 constitute a PPIase FKBP-type domain; the sequence is GMRVTMDFIG…LIKVEEQILP (86 aa).

The protein belongs to the FKBP-type PPIase family. Tig subfamily.

The protein resides in the cytoplasm. It catalyses the reaction [protein]-peptidylproline (omega=180) = [protein]-peptidylproline (omega=0). Functionally, involved in protein export. Acts as a chaperone by maintaining the newly synthesized protein in an open conformation. Functions as a peptidyl-prolyl cis-trans isomerase. The polypeptide is Trigger factor (Aeromonas salmonicida (strain A449)).